The primary structure comprises 215 residues: Adenylate kinase (215 aa).

ATP is bound at residue 10–15 (GAGKGT). Positions 30–59 (STGDIFRKNISENTPLGMEARSYMDKGLLV) are NMP. AMP is bound by residues Thr31, Arg36, 57–59 (LLV), 85–88 (GFPR), and Gln92. An LID region spans residues 126–163 (GRRVCTSCGGSFHIKFNPPTIDGKCNLCGSDIVQRKDD). Residue Arg127 participates in ATP binding. 2 residues coordinate Zn(2+): Cys130 and Cys133. Residue 136 to 137 (SF) coordinates ATP. 2 residues coordinate Zn(2+): Cys150 and Cys153. The AMP site is built by Arg160 and Arg171. Residue Lys199 participates in ATP binding.

The protein belongs to the adenylate kinase family. As to quaternary structure, monomer.

It localises to the cytoplasm. The catalysed reaction is AMP + ATP = 2 ADP. The protein operates within purine metabolism; AMP biosynthesis via salvage pathway; AMP from ADP: step 1/1. Functionally, catalyzes the reversible transfer of the terminal phosphate group between ATP and AMP. Plays an important role in cellular energy homeostasis and in adenine nucleotide metabolism. This Clostridium botulinum (strain Eklund 17B / Type B) protein is Adenylate kinase.